Here is a 515-residue protein sequence, read N- to C-terminus: Bifunctional purine biosynthesis protein PurH (515 aa).

The MGS-like domain occupies 1–144 (MGRKALISVS…KNHKFVTIIV (144 aa)).

It belongs to the PurH family.

It catalyses the reaction (6R)-10-formyltetrahydrofolate + 5-amino-1-(5-phospho-beta-D-ribosyl)imidazole-4-carboxamide = 5-formamido-1-(5-phospho-D-ribosyl)imidazole-4-carboxamide + (6S)-5,6,7,8-tetrahydrofolate. It carries out the reaction IMP + H2O = 5-formamido-1-(5-phospho-D-ribosyl)imidazole-4-carboxamide. The protein operates within purine metabolism; IMP biosynthesis via de novo pathway; 5-formamido-1-(5-phospho-D-ribosyl)imidazole-4-carboxamide from 5-amino-1-(5-phospho-D-ribosyl)imidazole-4-carboxamide (10-formyl THF route): step 1/1. Its pathway is purine metabolism; IMP biosynthesis via de novo pathway; IMP from 5-formamido-1-(5-phospho-D-ribosyl)imidazole-4-carboxamide: step 1/1. The sequence is that of Bifunctional purine biosynthesis protein PurH from Persephonella marina (strain DSM 14350 / EX-H1).